Consider the following 130-residue polypeptide: Ribonuclease P protein component 2 (130 aa).

The protein belongs to the eukaryotic/archaeal RNase P protein component 2 family. In terms of assembly, consists of a catalytic RNA component and at least 4-5 protein subunits.

It is found in the cytoplasm. The catalysed reaction is Endonucleolytic cleavage of RNA, removing 5'-extranucleotides from tRNA precursor.. Functionally, part of ribonuclease P, a protein complex that generates mature tRNA molecules by cleaving their 5'-ends. In Methanococcus maripaludis (strain C7 / ATCC BAA-1331), this protein is Ribonuclease P protein component 2.